We begin with the raw amino-acid sequence, 877 residues long: MVAFAGGARTEDAHLIDDEGQLLPVNGIEEYLFTALGASRGGDALHRVGITYHVVGVLGGQSSGKSTLLNCLFGTKFQTMDETKRRGQTTKGAFISRANFEVLRGDDGEMDAGASALMESCAGKSLPLFVVDFEGTDGFERGEDQSFERQLSLFALSVADVLLINMWAVDVGRFNAANMSLLRTIFEVNLQLFSHDSYTKEEKPTLLVVLRDFTEVETRTHFETVRKSFDKIWDNIVKPEAFKNSTIDTLFDLRYHVLPHFKLQRAAFDKETAKFRQWFYLSTCDEYLFHTRGMFRGVPLDGIPSYLSSCWEMIRKSKDLDIPTQREMLARHRCLEVKKQILQLFTEFCSNYTERLQRGELVTHLTSLLEQDVDDKLRDFHQQTRLYRIDIVRKTEAELEEELLKVELKLVGEYAKFISSKVLEELETAVSGTVDGALRWLLHQAQSIPFLSAEAGDAGGGTEHMSHLKSVERASSNDVYITDNETCNVLVHSFWKRLCRALQAEIELLYCDFSQQHQRQRESQTLNLYDRYASLVAEDPALQEAIAHFVSDAVFQKVSRRFASMAENAAETIHQAFEGVLNRNQDGTVRFFHTTKALQRIEPQARQAGLVLLGCLLYYRVKVVADRVVYKLEDTDGLSRAAVHLLGERRKLIVRENSEEQKFFLHYATISEAPRYPIGAPVAETDSADTSDNVVDRDCVLLSQQAVQRAFDLYTQKCEFTMQLQLRSIEGEKQNLPAWVLPVLLLLGWNEIWYVLSSPVLLVVVVIIAAVFLRGFLLTQWAIFEETGPTCVVVGVRVVVQQIRNIYKALVPMMPDDVKSNVARHRDPGSFSDVTASAVGTSWPYAAAEPTVLPPSTTSATLTRRLKKEEEVPTQKE.

Over 1–735 (MVAFAGGART…LRSIEGEKQN (735 aa)) the chain is Cytoplasmic. In terms of domain architecture, GB1/RHD3-type G spans 49–307 (GITYHVVGVL…VPLDGIPSYL (259 aa)). 59-66 (GGQSSGKS) contributes to the GTP binding site. A coiled-coil region spans residues 388–410 (RIDIVRKTEAELEEELLKVELKL). The chain crosses the membrane as a helical span at residues 736-756 (LPAWVLPVLLLLGWNEIWYVL). Residues 757–759 (SSP) lie on the Lumenal side of the membrane. A helical transmembrane segment spans residues 760 to 780 (VLLVVVVIIAAVFLRGFLLTQ). Residues 781 to 877 (WAIFEETGPT…KEEEVPTQKE (97 aa)) lie on the Cytoplasmic side of the membrane. The interval 850 to 877 (PTVLPPSTTSATLTRRLKKEEEVPTQKE) is disordered. The span at 867 to 877 (KKEEEVPTQKE) shows a compositional bias: basic and acidic residues.

It belongs to the TRAFAC class dynamin-like GTPase superfamily. GB1/RHD3 GTPase family. RHD3 subfamily.

The protein localises to the endoplasmic reticulum membrane. Its function is as follows. Probable GTP-binding protein that may be involved in cell development. The chain is Protein SEY1 homolog from Trypanosoma cruzi (strain CL Brener).